The following is a 418-amino-acid chain: Serine hydroxymethyltransferase (418 aa).

Residues leucine 121 and 125 to 127 (GHL) each bind (6S)-5,6,7,8-tetrahydrofolate. Residue lysine 230 is modified to N6-(pyridoxal phosphate)lysine. Residue 355-357 (SPF) coordinates (6S)-5,6,7,8-tetrahydrofolate.

Belongs to the SHMT family. As to quaternary structure, homodimer. The cofactor is pyridoxal 5'-phosphate.

It is found in the cytoplasm. It carries out the reaction (6R)-5,10-methylene-5,6,7,8-tetrahydrofolate + glycine + H2O = (6S)-5,6,7,8-tetrahydrofolate + L-serine. Its pathway is one-carbon metabolism; tetrahydrofolate interconversion. It functions in the pathway amino-acid biosynthesis; glycine biosynthesis; glycine from L-serine: step 1/1. Functionally, catalyzes the reversible interconversion of serine and glycine with tetrahydrofolate (THF) serving as the one-carbon carrier. This reaction serves as the major source of one-carbon groups required for the biosynthesis of purines, thymidylate, methionine, and other important biomolecules. Also exhibits THF-independent aldolase activity toward beta-hydroxyamino acids, producing glycine and aldehydes, via a retro-aldol mechanism. The polypeptide is Serine hydroxymethyltransferase (Streptococcus pyogenes serotype M5 (strain Manfredo)).